A 3312-amino-acid chain; its full sequence is Cadherin EGF LAG seven-pass G-type receptor 3 (3312 aa).

The N-terminal stretch at 1-32 is a signal peptide; sequence MMARRPPWRGLGGRSTPILLLLLLSLFPLSQE. Over 33-2540 the chain is Extracellular; that stretch reads ELGGGGHQGW…RLEGDLELLA (2508 aa). Disordered stretches follow at residues 90–112, 143–199, and 212–306; these read GRRQ…LGIE, GRTG…RKRV, and GSKG…EARK. Over residues 159-173 the composition is skewed to low complexity; the sequence is SSGVPGSGNSSPLPS. The span at 290–299 shows a compositional bias: pro residues; the sequence is RPGPRPPGLP. 9 Cadherin domains span residues 326 to 433, 434 to 545, 546 to 651, 652 to 756, 757 to 858, 859 to 961, 962 to 1067, 1068 to 1169, and 1170 to 1265; these read PQYN…SPVF, EQAQ…APQF, SEKR…IPIF, VSTP…RPEF, TMKE…RPVF, QSAH…APQF, VASH…APVF, PAEE…SPVL, and NNFQ…RVVI. Asn-632 is a glycosylation site (N-linked (GlcNAc...) asparagine). N-linked (GlcNAc...) asparagine glycosylation is present at Asn-847. Residues Asn-1182, Asn-1222, Asn-1317, and Asn-1327 are each glycosylated (N-linked (GlcNAc...) asparagine). Residues 1375–1433 form the EGF-like 1; calcium-binding domain; it reads DDNVCLREPCENYMKCVSVLRFDSSAPFLASASTLFRPIQPIAGLRCRCPPGFTGDFCE. 9 cysteine pairs are disulfide-bonded: Cys-1379-Cys-1390, Cys-1384-Cys-1421, Cys-1423-Cys-1432, Cys-1439-Cys-1450, Cys-1444-Cys-1459, Cys-1461-Cys-1470, Cys-1479-Cys-1490, Cys-1484-Cys-1500, and Cys-1502-Cys-1513. The 37-residue stretch at 1435 to 1471 folds into the EGF-like 2; calcium-binding domain; the sequence is ELDLCYSNPCRNGGACARREGGYTCVCRPRFTGEDCE. One can recognise an EGF-like 3; calcium-binding domain in the interval 1475–1514; that stretch reads EAGRCVPGVCRNGGTCTDAPNGGFRCQCPAGGAFEGPRCE. The 205-residue stretch at 1515 to 1719 folds into the Laminin G-like 1 domain; the sequence is VAARSFPPSS…VANNGTMAGC (205 aa). N-linked (GlcNAc...) asparagine glycans are attached at residues Asn-1649 and Asn-1713. Intrachain disulfides connect Cys-1693-Cys-1719, Cys-1726-Cys-1737, Cys-1731-Cys-1746, and Cys-1748-Cys-1757. Residues 1722–1758 enclose the EGF-like 4; calcium-binding domain; it reads KLHFCDSGPCKNSGFCSERWGSFSCDCPVGFGGKDCQ. Residues 1764–1944 enclose the Laminin G-like 2 domain; the sequence is PHHFRGNGTL…SHRVNAEPGC (181 aa). N-linked (GlcNAc...) asparagine glycosylation is present at Asn-1770. 9 disulfides stabilise this stretch: Cys-1915–Cys-1944, Cys-1950–Cys-1961, Cys-1955–Cys-1970, Cys-1972–Cys-1981, Cys-1985–Cys-1996, Cys-1990–Cys-2008, Cys-2010–Cys-2019, Cys-2027–Cys-2040, and Cys-2042–Cys-2052. The region spanning 1946–1982 is the EGF-like 5; calcium-binding domain; the sequence is VTNACASGPCPPHADCRDLWQTFSCTCQPGYYGPGCV. The residue at position 1963 (Asp-1963) is a (3R)-3-hydroxyaspartate. The region spanning 1983–2020 is the EGF-like 6; calcium-binding domain; sequence DACLLNPCQNQGSCRHLPGAPHGYTCDCVGGYFGHHCE. The EGF-like 7; calcium-binding domain maps to 2021-2053; that stretch reads HRMDQQCPRGWWGSPTCGPCNCDVHKGFDPNCN. Asn-2053 is a glycosylation site (N-linked (GlcNAc...) asparagine). Residues 2055–2090 enclose the EGF-like 8; calcium-binding domain; the sequence is TNGQCHCKEFHYRPRGSDSCLPCDCYPVGSTSRSCA. Disulfide bonds link Cys-2059-Cys-2074, Cys-2061-Cys-2077, Cys-2079-Cys-2089, Cys-2098-Cys-2107, and Cys-2110-Cys-2122. Residues 2077–2124 enclose the Laminin EGF-like domain; it reads CDCYPVGSTSRSCAPHSGQCPCRPGALGRQCNSCDSPFAEVTASGCRV. At Tyr-2126 the chain carries Phosphotyrosine. N-linked (GlcNAc...) asparagine glycosylation is found at Asn-2177, Asn-2196, Asn-2386, Asn-2474, and Asn-2506. The segment at 2361-2399 is disordered; it reads THVLLPSQSPRPSPSEVLPTSSSIENSTTSSVVPPPAPP. Residues 2368–2530 enclose the GAIN-B domain; it reads QSPRPSPSEV…GVLMDASPRE (163 aa). Over residues 2380-2391 the composition is skewed to low complexity; that stretch reads TSSSIENSTTSS. 2 disulfide bridges follow: Cys-2480-Cys-2512 and Cys-2500-Cys-2514. The segment at 2480–2530 is GPS; sequence CVQWDPPGLAEQHGVWTARDCELVHRNGSHARCRCSRTGTFGVLMDASPRE. Residues 2541-2561 traverse the membrane as a helical segment; that stretch reads VFTHVVVAVSVAALVLTAAIL. The Cytoplasmic segment spans residues 2562 to 2572; that stretch reads LSLRSLKSNVR. The chain crosses the membrane as a helical span at residues 2573–2593; it reads GIHANVAAALGVAELLFLLGI. Over 2594 to 2601 the chain is Extracellular; it reads HRTHNQLV. A helical membrane pass occupies residues 2602–2622; that stretch reads CTAVAILLHYFFLSTFAWLFV. Residues 2623 to 2643 lie on the Cytoplasmic side of the membrane; it reads QGLHLYRMQVEPRNVDRGAMR. A helical transmembrane segment spans residues 2644-2664; that stretch reads FYHALGWGVPAVLLGLAVGLD. Over 2665–2681 the chain is Extracellular; that stretch reads PEGYGNPDFCWISVHEP. A helical transmembrane segment spans residues 2682 to 2702; sequence LIWSFAGPVVLVIVMNGTMFL. At 2703–2725 the chain is on the cytoplasmic side; that stretch reads LAARTSCSTGQREAKKTSALTLR. Residues 2726–2746 form a helical membrane-spanning segment; it reads SSFLLLLLVSASWLFGLLAVN. Over 2747-2753 the chain is Extracellular; the sequence is HSILAFH. Residues 2754–2774 form a helical membrane-spanning segment; the sequence is YLHAGLCGLQGLAVLLLFCVL. Over 2775-3312 the chain is Cytoplasmic; sequence NADARAAWMP…SEVPRSEGHS (538 aa). 2 disordered regions span residues 2888–2927 and 2978–3006; these read AGAD…QRPL and TSKD…AQRQ. Residues 2890–2900 are compositionally biased toward acidic residues; sequence ADSDSDSDLSL. Residue Tyr-3051 is modified to Phosphotyrosine. Disordered regions lie at residues 3086–3243 and 3256–3312; these read EEAP…TEQL and SALS…EGHS. Ser-3097 carries the phosphoserine modification. Composition is skewed to low complexity over residues 3175 to 3198, 3256 to 3265, and 3272 to 3281; these read SPQR…SRSS, SALSSVQSSS, and TTATPSATAS. Over residues 3287-3300 the composition is skewed to polar residues; the sequence is TPRSATSHSISELS.

The protein belongs to the G-protein coupled receptor 2 family. LN-TM7 subfamily.

It localises to the cell membrane. Receptor that may have an important role in cell/cell signaling during nervous system formation. This Homo sapiens (Human) protein is Cadherin EGF LAG seven-pass G-type receptor 3 (CELSR3).